An 81-amino-acid polypeptide reads, in one-letter code: Small ribosomal subunit protein bS16 (81 aa).

Belongs to the bacterial ribosomal protein bS16 family.

In Agathobacter rectalis (strain ATCC 33656 / DSM 3377 / JCM 17463 / KCTC 5835 / VPI 0990) (Eubacterium rectale), this protein is Small ribosomal subunit protein bS16.